The chain runs to 238 residues: Uridylate kinase (238 aa).

12–15 provides a ligand contact to ATP; the sequence is KLSG. An involved in allosteric activation by GTP region spans residues 20 to 25; it reads GEKGFG. Residue Gly54 coordinates UMP. 2 residues coordinate ATP: Gly55 and Arg59. Residues Asp74 and 135–142 contribute to the UMP site; that span reads TGSPYFST. Positions 163, 169, and 172 each coordinate ATP.

It belongs to the UMP kinase family. As to quaternary structure, homohexamer.

The protein localises to the cytoplasm. It catalyses the reaction UMP + ATP = UDP + ADP. The protein operates within pyrimidine metabolism; CTP biosynthesis via de novo pathway; UDP from UMP (UMPK route): step 1/1. Its activity is regulated as follows. Allosterically activated by GTP. Inhibited by UTP. Its function is as follows. Catalyzes the reversible phosphorylation of UMP to UDP. The chain is Uridylate kinase from Lactococcus lactis subsp. lactis (strain IL1403) (Streptococcus lactis).